We begin with the raw amino-acid sequence, 1826 residues long: Kinesin-like protein KIF13B (1826 aa).

In terms of domain architecture, Kinesin motor spans Lys5–Ile353. Gly103–Ser110 is an ATP binding site. Positions Asn364 to Ser439 form a coiled coil. Residues Thr471–Gly535 form the FHA domain. Residues Lys546–Ser582 are disordered. The span at Ser561–Gln570 shows a compositional bias: polar residues. Coiled coils occupy residues Met607–Arg710, Ser752–Glu772, and Leu1096–Ala1143. At Ser661 the chain carries Phosphoserine. A disordered region spans residues Glu1367–Ser1420. 2 stretches are compositionally biased toward polar residues: residues Arg1378–Arg1392 and Glu1409–Ser1420. Residue Ser1379 is modified to Phosphoserine. Ser1381 is subject to Phosphoserine; by MARK2. A phosphoserine mark is found at Ser1382 and Ser1391. Ser1410 carries the post-translational modification Phosphoserine; by MARK2. A phosphoserine mark is found at Ser1432, Ser1438, and Ser1537. Position 1545 is a phosphothreonine (Thr1545). Ser1559 is modified (phosphoserine). Low complexity predominate over residues Ser1579–Ile1607. Disordered stretches follow at residues Ser1579 to Arg1650 and Met1662 to Pro1698. Positions Ser1608–Pro1624 are enriched in pro residues. At Ser1644 the chain carries Phosphoserine. Residues Pro1671–Ala1688 are compositionally biased toward low complexity. Residues Gly1721–Arg1763 form the CAP-Gly domain. The residue at position 1797 (Ser1797) is a Phosphoserine.

Belongs to the TRAFAC class myosin-kinesin ATPase superfamily. Kinesin family. As to quaternary structure, binds to DLG1 and DLG4. Interacts (when phosphorylated at Ser-1381 and Ser-1410) with 14-3-3. In terms of processing, phosphorylated at Ser-1381 and Ser-1410 by MARK2, promoting interaction with 14-3-3 and inhibiting microtubule-dependent accumulation and formation of axons. Ubiquitous.

It is found in the cytoplasm. It localises to the cytoskeleton. The protein resides in the cell projection. Its subcellular location is the axon. Its function is as follows. Involved in reorganization of the cortical cytoskeleton. Regulates axon formation by promoting the formation of extra axons. May be functionally important for the intracellular trafficking of MAGUKs and associated protein complexes. In Homo sapiens (Human), this protein is Kinesin-like protein KIF13B (KIF13B).